Reading from the N-terminus, the 522-residue chain is 2-isopropylmalate synthase (522 aa).

The 263-residue stretch at Val5–His267 folds into the Pyruvate carboxyltransferase domain. Asp14, His202, His204, and Asn238 together coordinate Mn(2+). Positions Gln392–Val522 are regulatory domain.

Belongs to the alpha-IPM synthase/homocitrate synthase family. LeuA type 1 subfamily. As to quaternary structure, homodimer. Mn(2+) serves as cofactor.

It localises to the cytoplasm. It catalyses the reaction 3-methyl-2-oxobutanoate + acetyl-CoA + H2O = (2S)-2-isopropylmalate + CoA + H(+). Its pathway is amino-acid biosynthesis; L-leucine biosynthesis; L-leucine from 3-methyl-2-oxobutanoate: step 1/4. In terms of biological role, catalyzes the condensation of the acetyl group of acetyl-CoA with 3-methyl-2-oxobutanoate (2-ketoisovalerate) to form 3-carboxy-3-hydroxy-4-methylpentanoate (2-isopropylmalate). The protein is 2-isopropylmalate synthase of Shewanella baltica (strain OS195).